The primary structure comprises 429 residues: Endoglucanase A (429 aa).

The N-terminal stretch at 1-34 (MVSKKQKFLTVILVIVLAIVIVGGVFGISFVKGR) is a signal peptide. A compositionally biased stretch (basic and acidic residues) spans 46 to 94 (AKTEQVKEPAKEEPKLVIKEKKQDESAKKEQELKKAKEEAEAAVEKETE). Residues 46 to 100 (AKTEQVKEPAKEEPKLVIKEKKQDESAKKEQELKKAKEEAEAAVEKETEKTEEEP) form a disordered region. Glutamate 249 acts as the Proton donor in catalysis. Glutamate 334 serves as the catalytic Nucleophile.

Belongs to the glycosyl hydrolase 5 (cellulase A) family.

It catalyses the reaction Endohydrolysis of (1-&gt;4)-beta-D-glucosidic linkages in cellulose, lichenin and cereal beta-D-glucans.. This chain is Endoglucanase A (celA), found in Butyrivibrio fibrisolvens.